The chain runs to 432 residues: Serine/threonine-protein phosphatase 2A activator 1 (432 aa).

Positions P322–K432 are disordered. Residues T366 to A389 show a composition bias toward basic and acidic residues. Residues T396–G412 show a composition bias toward low complexity.

Belongs to the PTPA-type PPIase family.

It is found in the cytoplasm. It localises to the nucleus. The enzyme catalyses [protein]-peptidylproline (omega=180) = [protein]-peptidylproline (omega=0). In terms of biological role, PPIases accelerate the folding of proteins. It catalyzes the cis-trans isomerization of proline imidic peptide bonds in oligopeptides. Acts as a regulatory subunit for PP2A-like phosphatases modulating their activity or substrate specificity, probably by inducing a conformational change in the catalytic subunit, a direct target of the PPIase. Can reactivate inactive phosphatase PP2A-phosphatase methylesterase complexes (PP2Ai) in presence of ATP and Mg(2+) by dissociating the inactive form from the complex. The polypeptide is Serine/threonine-protein phosphatase 2A activator 1 (RRD1) (Yarrowia lipolytica (strain CLIB 122 / E 150) (Yeast)).